The primary structure comprises 677 residues: Pre-mRNA-splicing factor CLF1 (677 aa).

HAT repeat units lie at residues 52–84 (EYQG…WELE), 86–118 (KEFR…AEMK), 120–152 (RNIN…MEEM), 154–185 (GNIP…LEKR), 187–218 (NEFD…FEEE), 220–255 (GTSD…YEAK), 257–291 (KEFE…FEKQ), 301–333 (VILS…LEES), 335–369 (GDVE…LWIF), 379–415 (KDME…FEIR), 417–448 (MDLQ…LERQ), 450–482 (FEFV…LERG), 484–518 (DDID…FEEY), 520–551 (GEYD…FEIN), 570–608 (EAKR…FEQT), and 613–646 (DDIA…YMFP).

It belongs to the crooked-neck family. As to quaternary structure, associated with the spliceosome.

The protein localises to the nucleus. Functionally, involved in pre-mRNA splicing and cell cycle progression. Required for the spliceosome assembly and initiation of the DNA replication. This is Pre-mRNA-splicing factor CLF1 (CLF1) from Paracoccidioides brasiliensis.